Here is an 84-residue protein sequence, read N- to C-terminus: Beta-toxin Ct16 (84 aa).

Residues 1-19 (MNYFILLFVATFLLLDVNC) form the signal peptide. In terms of domain architecture, LCN-type CS-alpha/beta spans 21–80 (KDGYPVDANNCKFECWKNEYCDELCKAKRAESGYCYKLKLSCWCEGLPDDEPTKTSDRCY). Intrachain disulfides connect C31-C79, C35-C55, C41-C62, and C45-C64. T82 carries the threonine amide modification.

This sequence belongs to the long (4 C-C) scorpion toxin superfamily. Sodium channel inhibitor family. Alpha subfamily. As to expression, expressed by the venom gland.

It is found in the secreted. Alpha toxins bind voltage-independently at site-3 of sodium channels (Nav) and inhibit the inactivation of the activated channels, thereby blocking neuronal transmission. Is possibly toxic to mice. The chain is Beta-toxin Ct16 from Centruroides tecomanus (Scorpion).